We begin with the raw amino-acid sequence, 519 residues long: MGGGGDTTDTNMMQRVNSSSGTSSSSIPKHNLHLNPALIRSHHHFRHPFTGAPPPPIPPISPYSQIPATLQPRHSRSMSQPSSFFSFDSLPPLNPSAPSVSVSVEEKTGAGFSPSLPPSPFTMCHSSSSRNAGDGENLPPRKSHRRSNSDVTFGFSSMMSQNQKSPPLSSLERSISGEDTSDWSNLVKKEPREGFYKGRKPEVEAAMDDVFTAYMNLDNIDVLNSFGGEDGKNGNENVEEMESSRGSGTKKTNGGSSSDSEGDSSASGNVKVALSSSSSGVKRRAGGDIAPTGRHYRSVSMDSCFMGKLNFGDESSLKLPPSSSAKVSPTNSGEGNSSAYSVEFGNSEFTAAEMKKIAADEKLAEIVMADPKRVKRILANRVSAARSKERKTRYMAELEHKVQTLQTEATTLSAQLTHLQRDSMGLTNQNSELKFRLQAMEQQAQLRDALSEKLNEEVQRLKLVIGEPNRRQSGSSSSESKMSLNPEMFQQLSISQLQHQQMQHSNQCSTMKAKHTSND.

Disordered regions lie at residues 1–30 (MGGG…IPKH), 45–83 (FRHP…QPSS), 108–202 (TGAG…RKPE), 222–295 (VLNS…TGRH), and 315–339 (SSLK…NSSA). Positions 51–61 (GAPPPPIPPIS) are enriched in pro residues. Positions 149-173 (SDVTFGFSSMMSQNQKSPPLSSLER) are enriched in polar residues. Positions 187–202 (VKKEPREGFYKGRKPE) are enriched in basic and acidic residues. Composition is skewed to low complexity over residues 244 to 268 (SRGS…SASG) and 317 to 329 (LKLP…KVSP). The span at 330 to 339 (TNSGEGNSSA) shows a compositional bias: polar residues. Positions 372–393 (KRVKRILANRVSAARSKERKTR) are basic motif. Positions 386-460 (RSKERKTRYM…SEKLNEEVQR (75 aa)) form a coiled coil. The leucine-zipper stretch occupies residues 398-433 (LEHKVQTLQTEATTLSAQLTHLQRDSMGLTNQNSEL). A disordered region spans residues 465-519 (IGEPNRRQSGSSSSESKMSLNPEMFQQLSISQLQHQQMQHSNQCSTMKAKHTSND). Low complexity-rich tracts occupy residues 473–483 (SGSSSSESKMS) and 490–509 (QQLS…NQCS).

Interacts with WUS, HEC1, KNAT1, KNAT2, HAT1, BEL1, and NGA1. In terms of tissue distribution, expressed in inflorescence meristem, floral organ primordia, gynoecia, ovules and carpel margin meristem.

The protein localises to the nucleus. Transcription factor that acts as a repressor of reproductive development, meristem size and plant growth. Acts as a transcriptional repressor in inflorescence tissues. Interacts with well known regulators of meristem and gynoecium development such as WUS, HEC1, KNAT1, KNAT2, HAT1, BEL1 and NGA1. Acts as a positive regulator of JAG and OFP1 expression in developing gynoecia. The sequence is that of bZIP transcription factor 30 from Arabidopsis thaliana (Mouse-ear cress).